The chain runs to 908 residues: Protein translocase subunit SecA (908 aa).

ATP contacts are provided by residues Gln-87, 105 to 109 (GEGKT), and Asp-512. Positions 865–908 (GGDDGSDEMMAHTPMIRDGDKVGRNDPCPCGSGRKYKQCHGKLS) are disordered. The span at 879-888 (MIRDGDKVGR) shows a compositional bias: basic and acidic residues. The Zn(2+) site is built by Cys-892, Cys-894, Cys-903, and His-904. The span at 898-908 (RKYKQCHGKLS) shows a compositional bias: basic residues.

The protein belongs to the SecA family. As to quaternary structure, monomer and homodimer. Part of the essential Sec protein translocation apparatus which comprises SecA, SecYEG and auxiliary proteins SecDF-YajC and YidC. It depends on Zn(2+) as a cofactor.

It localises to the cell inner membrane. The protein localises to the cytoplasm. The catalysed reaction is ATP + H2O + cellular proteinSide 1 = ADP + phosphate + cellular proteinSide 2.. In terms of biological role, part of the Sec protein translocase complex. Interacts with the SecYEG preprotein conducting channel. Has a central role in coupling the hydrolysis of ATP to the transfer of proteins into and across the cell membrane, serving both as a receptor for the preprotein-SecB complex and as an ATP-driven molecular motor driving the stepwise translocation of polypeptide chains across the membrane. The sequence is that of Protein translocase subunit SecA from Shewanella sp. (strain ANA-3).